A 424-amino-acid polypeptide reads, in one-letter code: Protein pellino (424 aa).

Positions 1-21 (MVKRTDGTESPILAEDGGDGH) are disordered. S10 is subject to Phosphoserine.

The protein belongs to the pellino family. As to quaternary structure, interacts with pll.

Functionally, scaffold protein involved in the Toll signaling pathway via its interaction with pelle/pll kinase. This chain is Protein pellino (Pli), found in Drosophila melanogaster (Fruit fly).